We begin with the raw amino-acid sequence, 377 residues long: 23S rRNA (uracil(747)-C(5))-methyltransferase RlmC (377 aa).

Cysteine 3, cysteine 11, cysteine 14, and cysteine 87 together coordinate [4Fe-4S] cluster. Glutamine 212, phenylalanine 241, glutamate 262, and asparagine 307 together coordinate S-adenosyl-L-methionine. Cysteine 334 (nucleophile) is an active-site residue.

Belongs to the class I-like SAM-binding methyltransferase superfamily. RNA M5U methyltransferase family. RlmC subfamily.

It catalyses the reaction uridine(747) in 23S rRNA + S-adenosyl-L-methionine = 5-methyluridine(747) in 23S rRNA + S-adenosyl-L-homocysteine + H(+). In terms of biological role, catalyzes the formation of 5-methyl-uridine at position 747 (m5U747) in 23S rRNA. The sequence is that of 23S rRNA (uracil(747)-C(5))-methyltransferase RlmC from Proteus mirabilis (strain HI4320).